The primary structure comprises 214 residues: Insulin-like growth factor 2 (214 aa).

Residues 48–79 (EVASAETLCGGELVDALQFVCEDRGFYFSRPT) are b. Cystine bridges form between cysteine 56–cysteine 97, cysteine 68–cysteine 110, and cysteine 96–cysteine 101. A c region spans residues 80-90 (SRSNSRRSQNR). Residues 91–111 (GIVEECCFRSCDLNLLEQYCA) form an a region. The segment at 112-117 (KPAKSE) is d. Residues 118–214 (RDVSATSLQI…PPTDNYVSHN (97 aa)) constitute a propeptide, e peptide.

This sequence belongs to the insulin family.

It localises to the secreted. In terms of biological role, the insulin-like growth factors, isolated from plasma, are structurally and functionally related to insulin but have a much higher growth-promoting activity. Acts as a ligand for integrin which is required for IGF2 signaling. The polypeptide is Insulin-like growth factor 2 (Oncorhynchus mykiss (Rainbow trout)).